The primary structure comprises 369 residues: Transmembrane protein adipocyte-associated 1 (369 aa).

A glycan (N-linked (GlcNAc...) asparagine) is linked at Asn20. 7 helical membrane-spanning segments follow: residues Leu45–Ala65, Ser73–Ala93, Phe120–Glu140, Val148–Ile168, Gln189–Pro209, Leu237–Val257, and Phe262–Gly282. N-linked (GlcNAc...) asparagine glycosylation occurs at Asn329.

It belongs to the UPF0359 family. Ubiquitous, with higher levels in heart, brain, lung, liver and kidney.

It localises to the membrane. In Mus musculus (Mouse), this protein is Transmembrane protein adipocyte-associated 1 (Tpra1).